Consider the following 400-residue polypeptide: MATMISNLPRDLIEEIFSRVPLTSMKAVRLTCKSWNNLSKSESFTKVHIGRAATREEKTMIVDVMPHKLNLMSIVIDDVTPSAEFKGQFSLLHKNYRINQVLHYEGLLLCIMKDPTRIVVWNPYLGQTRWIQLRYFHRPHGIDHFRYALGYADKESCSSLKFLRFLDYFYKAPEEEFFWYEIYDFDSGLWTTLNVTPHWGIYSTCPCVSLKGNTYWPAKERSTQGFQDYIIRFDFTRERFGPLLALPTDRESSFVSLSCVKEEKLAALFKHRLHHDSYEYEFEIWITTKIEVEMVSWSKFLRMDMRPKMELPLTFYIDEEKKVFMGFDHGEYPKLLFLNVVGETGFLRKFENIQYRSPCSYVPSLVQVKKLARDRLRKQRSLENRRFAQNILRLARNGKS.

The F-box domain maps to 2–47 (ATMISNLPRDLIEEIFSRVPLTSMKAVRLTCKSWNNLSKSESFTKV).

This chain is Putative F-box protein At5g41510, found in Arabidopsis thaliana (Mouse-ear cress).